An 81-amino-acid chain; its full sequence is Thrombin-like enzyme collinein-3 (81 aa).

The active site involves D4. A disulfide bridge links C51 with C68.

Monomer. In terms of tissue distribution, expressed by the vanom gland.

The protein localises to the secreted. In terms of biological role, thrombin-like snake venom serine protease. This Crotalus durissus collilineatus (Brazilian rattlesnake) protein is Thrombin-like enzyme collinein-3.